Consider the following 275-residue polypeptide: Intercellular adhesion molecule 2 (275 aa).

The signal sequence occupies residues M1–E24. Residues K25–Q223 lie on the Extracellular side of the membrane. The 58-residue stretch at K41 to K98 folds into the Ig-like C2-type 1 domain. Residues N47, N82, N105, N153, N158, N176, and N187 are each glycosylated (N-linked (GlcNAc...) asparagine). Disulfide bonds link C48–C91 and C52–C95. An Ig-like C2-type 2 domain is found at G127–I197. The cysteines at positions 134 and 190 are disulfide-linked. Residues M224–F248 form a helical membrane-spanning segment. Residues G249–P275 are Cytoplasmic-facing. Residues H251 to P275 form a required for interaction with EZR, MSN and RDX and co-localization to microvilli region.

Belongs to the immunoglobulin superfamily. ICAM family. In terms of assembly, interacts with RDX, EZR and MSN.

It localises to the membrane. Its subcellular location is the cell projection. The protein resides in the microvillus. Its function is as follows. ICAM proteins are ligands for the leukocyte adhesion protein LFA-1 (integrin alpha-L/beta-2). ICAM2 may play a role in lymphocyte recirculation by blocking LFA-1-dependent cell adhesion. It mediates adhesive interactions important for antigen-specific immune response, NK-cell mediated clearance, lymphocyte recirculation, and other cellular interactions important for immune response and surveillance. This chain is Intercellular adhesion molecule 2 (ICAM2), found in Gorilla gorilla gorilla (Western lowland gorilla).